The chain runs to 75 residues: Protease B inhibitor 2 (75 aa).

A Phosphothreonine modification is found at threonine 74.

The protein belongs to the protease inhibitor I9 family. In terms of assembly, part of the heterodimeric LMA1 complex together with the thioredoxin II/TRX2. LMA1 binds to the ATPase SEC18.

The protein localises to the cytoplasm. Cytosolic inhibitor of vacuolar proteinase B (yscB), probably regulating protease B activity during limited proteolysis. PBI2 is a component of the LMA1 complex, which is involved in the facilitation of vesicle fusion such as homotypic vacuole and ER-derived COPII vesicle fusion with the Golgi. The polypeptide is Protease B inhibitor 2 (PBI2) (Saccharomyces cerevisiae (strain ATCC 204508 / S288c) (Baker's yeast)).